The following is a 561-amino-acid chain: Putative transport protein ASA_2308 (561 aa).

The next 5 helical transmembrane spans lie at 8–28, 37–57, 66–86, 90–110, and 161–181; these read LLHQSDSLLLFVVLAFGLLLG, IGNTIGVLFTALLFGQMGFEF, FMLFIFCVGIEAGPHFFSVFL, IHYITLTLVILLTALLLTVGL, and NMGIGYALTYLVGLVGLMLVV. 2 RCK C-terminal domains span residues 206–291 and 293–376; these read SDNE…NYRN and KEVF…KIGF. Helical transmembrane passes span 386-406, 409-429, 450-470, 476-496, and 541-561; these read LVAFTTFFVLGLLIGSVSLVF, LEFGLGNAVGLLLAGILMGYL, LGLAVFMVSTGLKAGGGILDH, AVVLFSGMLVTTLPVLVGYLF, and TYAVANVMLTLAGSFIIGFWF.

Belongs to the AAE transporter (TC 2.A.81) family. YbjL subfamily.

It localises to the cell membrane. This Aeromonas salmonicida (strain A449) protein is Putative transport protein ASA_2308.